The chain runs to 206 residues: Large ribosomal subunit protein uL13x (206 aa).

Belongs to the universal ribosomal protein uL13 family.

This chain is Large ribosomal subunit protein uL13x (RPL13AC), found in Arabidopsis thaliana (Mouse-ear cress).